Reading from the N-terminus, the 409-residue chain is Peptidase T (409 aa).

H78 provides a ligand contact to Zn(2+). The active site involves D80. D139 serves as a coordination point for Zn(2+). Residue E173 is the Proton acceptor of the active site. Zn(2+) is bound by residues E174, D196, and H378.

This sequence belongs to the peptidase M20B family. The cofactor is Zn(2+).

It localises to the cytoplasm. It catalyses the reaction Release of the N-terminal residue from a tripeptide.. Cleaves the N-terminal amino acid of tripeptides. The polypeptide is Peptidase T (Shewanella sediminis (strain HAW-EB3)).